A 666-amino-acid polypeptide reads, in one-letter code: Threonine--tRNA ligase (666 aa).

One can recognise a TGS domain in the interval 7 to 70; it reads QQVTLTVTLP…TADCTAEIIT (64 aa). The catalytic stretch occupies residues 253-555; that stretch reads DHRKLGTELE…LIEHTAGNFP (303 aa). Zn(2+) is bound by residues cysteine 351, histidine 402, and histidine 532.

This sequence belongs to the class-II aminoacyl-tRNA synthetase family. As to quaternary structure, homodimer. Requires Zn(2+) as cofactor.

It is found in the cytoplasm. The catalysed reaction is tRNA(Thr) + L-threonine + ATP = L-threonyl-tRNA(Thr) + AMP + diphosphate + H(+). Catalyzes the attachment of threonine to tRNA(Thr) in a two-step reaction: L-threonine is first activated by ATP to form Thr-AMP and then transferred to the acceptor end of tRNA(Thr). Also edits incorrectly charged L-seryl-tRNA(Thr). The polypeptide is Threonine--tRNA ligase (Chlorobium phaeovibrioides (strain DSM 265 / 1930) (Prosthecochloris vibrioformis (strain DSM 265))).